Reading from the N-terminus, the 445-residue chain is Tryptamine benzoyltransferase 1 (445 aa).

Active-site proton acceptor residues include H150 and D382.

Belongs to the plant acyltransferase family.

In terms of biological role, hydroxycinnamoyl transferase that catalyzes the transfer of an acyl from benzoyl-CoA to tryptamine, to produce benzoyl tryptamine. Serotonin and tyramine serve as acyl acceptors in vitro. Can use p-coumaroyl-CoA, and to a lesser extent caffeoyl-CoA, as acyl donors. In Oryza sativa subsp. japonica (Rice), this protein is Tryptamine benzoyltransferase 1.